Reading from the N-terminus, the 215-residue chain is Protein Thf1 (215 aa).

A coiled-coil region spans residues Ile-188–Gln-209.

Belongs to the THF1 family.

In terms of biological role, may be involved in photosynthetic membrane biogenesis. This is Protein Thf1 from Synechococcus sp. (strain CC9902).